A 168-amino-acid chain; its full sequence is Outer-membrane lipoprotein YfiB (168 aa).

Residues 1 to 25 (MLPQRLHPSRLLALALFSLVLGLAG) form the signal peptide. Cysteine 26 carries N-palmitoyl cysteine lipidation. Cysteine 26 carries the S-diacylglycerol cysteine lipid modification. Residues 53–168 (EGWEFGMSSK…RRVAIIVPAE (116 aa)) enclose the OmpA-like domain.

This sequence belongs to the outer membrane OOP (TC 1.B.6) superfamily. As to quaternary structure, homodimer. Interacts with YfiR. The YfiB-YfiR complex is a 2:2 heterotetramer.

It is found in the cell outer membrane. Both lipid anchor in the outer membrane and peptidoglycan binding are required for full activity. Once activated by certain cell stress, the dimeric YfiB transforms from a compact conformation to a stretched conformation, allowing the periplasmic domain of the membrane-anchored YfiB to penetrate the cell wall and sequester the YfiR dimer. GMP enhances the binding affinity between YfiB and YfiR. Its function is as follows. Activates the diguanylate cyclase TpbB/YfiN by sequestering YfiR at the outer membrane, which counteracts the YfiR-mediated repression of TpbB/YfiN at the inner membrane and leads to increased c-di-GMP production. May act as a sensor of envelope stress. Functionally, part of the YfiB-TpbB-YfiR (or yfiBNR) system, encoding a tripartite signaling module that modulates intracellular c-di-GMP levels. The system is a key regulator of the small colony variant (SCV) phenotype, and plays an important role in biofilm formation and in vivo persistence. The c-di-GMP produced by TpbB/YfiN stimulates the production of the Pel and Psl exopolysaccharides, which promotes surface attachment, generates an SCV phenotype and confers resistance against phagocytosis. In Pseudomonas aeruginosa (strain ATCC 15692 / DSM 22644 / CIP 104116 / JCM 14847 / LMG 12228 / 1C / PRS 101 / PAO1), this protein is Outer-membrane lipoprotein YfiB.